We begin with the raw amino-acid sequence, 284 residues long: UPF0294 protein VV1_1880 (284 aa).

This sequence belongs to the UPF0294 family.

The protein resides in the cytoplasm. The sequence is that of UPF0294 protein VV1_1880 from Vibrio vulnificus (strain CMCP6).